The following is a 339-amino-acid chain: Glutamyl-tRNA reductase (339 aa).

Residues 50-53, Ser102, 107-109, and Gln113 each bind substrate; these read TCHR and ETE. Cys51 serves as the catalytic Nucleophile. 181-186 contacts NADP(+); the sequence is GYSDIN.

This sequence belongs to the glutamyl-tRNA reductase family. In terms of assembly, homodimer.

The catalysed reaction is (S)-4-amino-5-oxopentanoate + tRNA(Glu) + NADP(+) = L-glutamyl-tRNA(Glu) + NADPH + H(+). It participates in porphyrin-containing compound metabolism; protoporphyrin-IX biosynthesis; 5-aminolevulinate from L-glutamyl-tRNA(Glu): step 1/2. Functionally, catalyzes the NADPH-dependent reduction of glutamyl-tRNA(Glu) to glutamate 1-semialdehyde (GSA). The sequence is that of Glutamyl-tRNA reductase from Chlamydia pneumoniae (Chlamydophila pneumoniae).